A 285-amino-acid polypeptide reads, in one-letter code: Polyamine aminopropyltransferase (285 aa).

The PABS domain maps to 5–238 (EMWYETLHTG…GIMTFAWASD (234 aa)). Glutamine 33 lines the S-methyl-5'-thioadenosine pocket. 2 residues coordinate spermidine: histidine 64 and aspartate 88. S-methyl-5'-thioadenosine contacts are provided by residues glutamate 108 and 140-141 (DG). Aspartate 158 serves as the catalytic Proton acceptor. Residue 158–161 (DCTD) coordinates spermidine. Proline 165 is an S-methyl-5'-thioadenosine binding site.

It belongs to the spermidine/spermine synthase family. As to quaternary structure, homodimer or homotetramer.

It localises to the cytoplasm. The catalysed reaction is S-adenosyl 3-(methylsulfanyl)propylamine + putrescine = S-methyl-5'-thioadenosine + spermidine + H(+). It participates in amine and polyamine biosynthesis; spermidine biosynthesis; spermidine from putrescine: step 1/1. Functionally, catalyzes the irreversible transfer of a propylamine group from the amino donor S-adenosylmethioninamine (decarboxy-AdoMet) to putrescine (1,4-diaminobutane) to yield spermidine. The polypeptide is Polyamine aminopropyltransferase (Erwinia tasmaniensis (strain DSM 17950 / CFBP 7177 / CIP 109463 / NCPPB 4357 / Et1/99)).